Consider the following 213-residue polypeptide: Maleylacetoacetate isomerase (213 aa).

One can recognise a GST N-terminal domain in the interval 3 to 84 (NETVLYDYWR…YLAETRDGTG (82 aa)). Residues 89–213 (HPIDRQRVRA…QRAHPDRAKP (125 aa)) enclose the GST C-terminal domain.

Belongs to the GST superfamily. Zeta family.

The catalysed reaction is 4-maleylacetoacetate = 4-fumarylacetoacetate. It participates in amino-acid degradation; L-phenylalanine degradation; acetoacetate and fumarate from L-phenylalanine: step 5/6. The sequence is that of Maleylacetoacetate isomerase (maiA) from Rhizobium meliloti (strain 1021) (Ensifer meliloti).